The chain runs to 573 residues: Formate--tetrahydrofolate ligase 3 (573 aa).

66-73 contributes to the ATP binding site; the sequence is TPLGEGKT.

It belongs to the formate--tetrahydrofolate ligase family.

The enzyme catalyses (6S)-5,6,7,8-tetrahydrofolate + formate + ATP = (6R)-10-formyltetrahydrofolate + ADP + phosphate. The protein operates within one-carbon metabolism; tetrahydrofolate interconversion. The protein is Formate--tetrahydrofolate ligase 3 of Rubrobacter xylanophilus (strain DSM 9941 / JCM 11954 / NBRC 16129 / PRD-1).